A 397-amino-acid polypeptide reads, in one-letter code: Enoyl-[acyl-carrier-protein] reductase [NADH] (397 aa).

NAD(+) contacts are provided by residues 48–53 (GASTGY), 74–75 (FE), 111–112 (DA), and 139–140 (VA). Tyr225 serves as a coordination point for substrate. The active-site Proton donor is the Tyr235. Residues Lys244 and 273–275 (VVT) each bind NAD(+).

Belongs to the TER reductase family. As to quaternary structure, monomer.

It catalyses the reaction a 2,3-saturated acyl-[ACP] + NAD(+) = a (2E)-enoyl-[ACP] + NADH + H(+). Its pathway is lipid metabolism; fatty acid biosynthesis. Its function is as follows. Involved in the final reduction of the elongation cycle of fatty acid synthesis (FAS II). Catalyzes the reduction of a carbon-carbon double bond in an enoyl moiety that is covalently linked to an acyl carrier protein (ACP). The polypeptide is Enoyl-[acyl-carrier-protein] reductase [NADH] (Burkholderia pseudomallei (strain 1106a)).